A 106-amino-acid chain; its full sequence is Cyclin-dependent protein kinase inhibitor SMR15 (106 aa).

Its function is as follows. Probable cyclin-dependent protein kinase (CDK) inhibitor that functions as a repressor of mitosis in the endoreduplication cell cycle. This chain is Cyclin-dependent protein kinase inhibitor SMR15, found in Arabidopsis thaliana (Mouse-ear cress).